We begin with the raw amino-acid sequence, 940 residues long: UvrABC system protein A (940 aa).

31–38 (GLSGSGKS) contributes to the ATP binding site. The C4-type zinc-finger motif lies at 252-279 (CPQCGYSMQELEPRLFSFNNPAGACGTC). ABC transporter domains follow at residues 309–586 (WDQK…PNSL) and 606–936 (RDPK…RFLK). 639–646 (GVSGSGKS) contributes to the ATP binding site. A C4-type zinc finger spans residues 739-765 (CEACQGDGVIKVEMHFLPDVYVPCDVC).

Belongs to the ABC transporter superfamily. UvrA family. As to quaternary structure, forms a heterotetramer with UvrB during the search for lesions.

The protein localises to the cytoplasm. Its function is as follows. The UvrABC repair system catalyzes the recognition and processing of DNA lesions. UvrA is an ATPase and a DNA-binding protein. A damage recognition complex composed of 2 UvrA and 2 UvrB subunits scans DNA for abnormalities. When the presence of a lesion has been verified by UvrB, the UvrA molecules dissociate. The chain is UvrABC system protein A from Vibrio parahaemolyticus serotype O3:K6 (strain RIMD 2210633).